Consider the following 210-residue polypeptide: Redox-sensing transcriptional repressor Rex (210 aa).

A DNA-binding region (H-T-H motif) is located at residues 16-55 (IYSRYLRQLIEEGVETVSSGEIAAGVGVSSAQVRKDLAYF). Position 90–95 (90–95 (GAGKLG)) interacts with NAD(+).

The protein belongs to the transcriptional regulatory Rex family. Homodimer.

The protein localises to the cytoplasm. Its function is as follows. Modulates transcription in response to changes in cellular NADH/NAD(+) redox state. The polypeptide is Redox-sensing transcriptional repressor Rex (Syntrophomonas wolfei subsp. wolfei (strain DSM 2245B / Goettingen)).